The chain runs to 872 residues: MSEVPDSYDPDEAEQKWRDEWLESDVYSYDGDEERPDYIIDTPPPYPTGNLHIGNALGWCYMDYAARYHRLQGDDVLFPQGWDCHGLPTEVKVEENRDIHRTDVSREQFREWCVEHTDEQIAAMKETMRTLGFSQDWDHEFRTMDDSYWQETQRSFLQMADSDYVYQDEHPVNWCPRCETAIADAEVENEDREGTLYYITFSGADNDDIEIATTRPELLPACVAIAVDPDDDRFEGRVGDRFEVPIFGQEVELIADDDVDGDFGTGAVMICTFGDKQDVDWWAEHDLDLRPVVTEDGHLNERAGEFEGRSIDEAKDEIATALSKSGHLHKEEPTEQSVGCCWRCDTPIEILSKEQWFVKVDQEEILETAQDIAWYPDHMYERLEEWTEGMEWDWVISRQRVFATPIPAWECADCGHIELADESEVPVDPTNDEPAVGSCPECGSDDWVGETDVMDTWMDSSISPLYVAGWPDETFEPVQLREQGHDIIRTWAFYTILRTAAVTDEIPWEEALINGMVFGDDGNKMSKSRGNFVQPEEVVEEHSADAFRQAMALGGQPGSDIQFQWKEVTSASRFQTKLWNITKFASEHIDESTPDIEAPAYRDADEWILARCARVADEVADDMDEYRFDSALRTVREFVWHDLADDYLELIKGRLYEGRPGERKAAEHALFVSLSASLRMLSPFAPFITEEAWSHLPADGSVHNAAWPDPPAGDEAAEERGELIAEVAATIRGWKSDEGKPLNADLERVEVYIDEDRPLDTYDLADTVNGPVYIEEGTPSVELVPVGVDIEHSELGPVFRDKAGEVVGRLESADPAELQAELDTDGHVEFEVDGETVTVEPEMFDIVEEQRAESGEEVVVLEADDATVLVFE.

Residues 45–55 (PYPTGNLHIGN) carry the 'HIGH' region motif. Residues 524 to 528 (KMSKS) carry the 'KMSKS' region motif. K527 is a binding site for ATP.

It belongs to the class-I aminoacyl-tRNA synthetase family. ValS type 2 subfamily.

The protein resides in the cytoplasm. The enzyme catalyses tRNA(Val) + L-valine + ATP = L-valyl-tRNA(Val) + AMP + diphosphate. Its function is as follows. Catalyzes the attachment of valine to tRNA(Val). As ValRS can inadvertently accommodate and process structurally similar amino acids such as threonine, to avoid such errors, it has a 'posttransfer' editing activity that hydrolyzes mischarged Thr-tRNA(Val) in a tRNA-dependent manner. The sequence is that of Valine--tRNA ligase from Natronomonas pharaonis (strain ATCC 35678 / DSM 2160 / CIP 103997 / JCM 8858 / NBRC 14720 / NCIMB 2260 / Gabara) (Halobacterium pharaonis).